We begin with the raw amino-acid sequence, 570 residues long: Endo-1,4-beta-xylanase 5-like (570 aa).

The signal sequence occupies residues 1 to 23; it reads MNSIKNGFFLCMIFLLWCHVDSG. N-linked (GlcNAc...) asparagine glycosylation is found at N197, N261, and N307. In terms of domain architecture, GH10 spans 202–501; sequence KGVVISLKQT…TQTGDVIDKL (300 aa). The active-site Proton donor is E332. The N-linked (GlcNAc...) asparagine glycan is linked to N346. E439 acts as the Nucleophile in catalysis. N-linked (GlcNAc...) asparagine glycans are attached at residues N490, N515, N537, and N545.

It belongs to the glycosyl hydrolase 10 (cellulase F) family.

The enzyme catalyses Endohydrolysis of (1-&gt;4)-beta-D-xylosidic linkages in xylans.. It functions in the pathway glycan degradation; xylan degradation. Functionally, binds to and hydrolyzes insoluble and soluble xylan substrates. This is Endo-1,4-beta-xylanase 5-like from Arabidopsis thaliana (Mouse-ear cress).